Consider the following 673-residue polypeptide: Putative K(+)-stimulated pyrophosphate-energized sodium pump (673 aa).

Transmembrane regions (helical) follow at residues 3–23, 62–82, 84–104, 127–147, and 154–174; these read SFIV…FMLS, IVIV…ACFI, GAIF…KANV, VMGM…YYIF, and VTGF…GGGI. Lys177 contributes to the substrate binding site. Mg(2+) contacts are provided by Asp180, Asp184, Asn207, and Asp210. 6 helical membrane-spanning segments follow: residues 222–242, 247–267, 279–299, 302–322, 364–384, and 387–407; these read LFES…VVYA, VMFP…GILF, ALNT…AILS, IFGN…GMII, LWPI…MGGG, and AMVG…TTGL. Residue Asp419 coordinates Mg(2+). 4 helical membrane passes run 449 to 469, 486 to 506, 553 to 573, and 576 to 596; these read AAIG…SLFA, VTLV…ALTM, EMIL…LLLG, and ALGG…ILMS. Residues Asp603, Asp629, and Asp633 each coordinate Ca(2+). Lys636 provides a ligand contact to substrate. The helical transmembrane segment at 652-672 threads the bilayer; the sequence is IVSLVFAPVVLQYGGILLNLI.

It belongs to the H(+)-translocating pyrophosphatase (TC 3.A.10) family. K(+)-stimulated subfamily. Homodimer. Mg(2+) is required as a cofactor.

The protein localises to the cell membrane. It carries out the reaction Na(+)(in) + diphosphate + H2O = Na(+)(out) + 2 phosphate + H(+). Its activity is regulated as follows. Requires K(+) for maximal activity. In terms of biological role, sodium pump that utilizes the energy of pyrophosphate hydrolysis as the driving force for Na(+) movement across the membrane. The chain is Putative K(+)-stimulated pyrophosphate-energized sodium pump from Clostridium tetani (strain Massachusetts / E88).